A 357-amino-acid polypeptide reads, in one-letter code: Probable dual-specificity RNA methyltransferase RlmN (357 aa).

Residue Glu95 is the Proton acceptor of the active site. Residues 105–343 (KKSSYTLCLS…VSIREERGSD (239 aa)) form the Radical SAM core domain. Cysteines 112 and 348 form a disulfide. Cys119, Cys123, and Cys126 together coordinate [4Fe-4S] cluster. Residues 174–175 (GE), Ser206, 229–231 (SLH), and Asn305 each bind S-adenosyl-L-methionine. Cys348 (S-methylcysteine intermediate) is an active-site residue.

The protein belongs to the radical SAM superfamily. RlmN family. The cofactor is [4Fe-4S] cluster.

It localises to the cytoplasm. The catalysed reaction is adenosine(2503) in 23S rRNA + 2 reduced [2Fe-2S]-[ferredoxin] + 2 S-adenosyl-L-methionine = 2-methyladenosine(2503) in 23S rRNA + 5'-deoxyadenosine + L-methionine + 2 oxidized [2Fe-2S]-[ferredoxin] + S-adenosyl-L-homocysteine. It catalyses the reaction adenosine(37) in tRNA + 2 reduced [2Fe-2S]-[ferredoxin] + 2 S-adenosyl-L-methionine = 2-methyladenosine(37) in tRNA + 5'-deoxyadenosine + L-methionine + 2 oxidized [2Fe-2S]-[ferredoxin] + S-adenosyl-L-homocysteine. Functionally, specifically methylates position 2 of adenine 2503 in 23S rRNA and position 2 of adenine 37 in tRNAs. This chain is Probable dual-specificity RNA methyltransferase RlmN, found in Syntrophomonas wolfei subsp. wolfei (strain DSM 2245B / Goettingen).